Consider the following 95-residue polypeptide: Integration host factor subunit beta (95 aa).

This sequence belongs to the bacterial histone-like protein family. Heterodimer of an alpha and a beta chain.

Its function is as follows. This protein is one of the two subunits of integration host factor, a specific DNA-binding protein that functions in genetic recombination as well as in transcriptional and translational control. The polypeptide is Integration host factor subunit beta (Shewanella loihica (strain ATCC BAA-1088 / PV-4)).